The chain runs to 362 residues: Probable RNA methyltransferase Tbd_1951 (362 aa).

E89 acts as the Proton acceptor in catalysis. One can recognise a Radical SAM core domain in the interval 92-318 (LLPRDGVCVS…AKLRHSAGQD (227 aa)). A disulfide bridge links C99 with C323. Residues C106, C110, and C113 each contribute to the [4Fe-4S] cluster site. Residues 151–152 (GE), S181, 204–206 (SLH), and N280 contribute to the S-adenosyl-L-methionine site. C323 serves as the catalytic S-methylcysteine intermediate. The segment at 342–362 (LPSAETPAASPKAAASIGFPG) is disordered. The span at 343–362 (PSAETPAASPKAAASIGFPG) shows a compositional bias: low complexity.

Belongs to the radical SAM superfamily. RlmN family. [4Fe-4S] cluster serves as cofactor.

The protein resides in the cytoplasm. The protein is Probable RNA methyltransferase Tbd_1951 of Thiobacillus denitrificans (strain ATCC 25259 / T1).